The chain runs to 163 residues: MTGKFTKEEVIGVVFSKLRPSPNDVFADIGCGSGAVTEFFAPYVRKAYAIDIEISDEARERLKRFDNVVLLEMDGKEFLKKYSPDVVFIGGTKGVEEMLEICNARRVVVNAARIEVALSAARKMREKGIFREIVLVNAAKSYELAGGLAFRSLNPVFVVFGER.

Residues Thr6, 30-34 (GCGSG), Asp51, and Gly75 each bind S-adenosyl-L-methionine.

The protein belongs to the methyltransferase superfamily. Archaeal-type CbiT family.

It carries out the reaction Co-precorrin-6B + S-adenosyl-L-methionine = Co-precorrin-7 + S-adenosyl-L-homocysteine + CO2. It functions in the pathway cofactor biosynthesis; adenosylcobalamin biosynthesis; cob(II)yrinate a,c-diamide from sirohydrochlorin (anaerobic route): step 8/10. Catalyzes the methylation of C-15 in cobalt-precorrin-6B followed by the decarboxylation of C-12 to form cobalt-precorrin-7. In Archaeoglobus fulgidus (strain ATCC 49558 / DSM 4304 / JCM 9628 / NBRC 100126 / VC-16), this protein is Probable cobalt-precorrin-6B C(15)-methyltransferase (decarboxylating).